The following is a 432-amino-acid chain: Glutamyl-tRNA reductase (432 aa).

Substrate-binding positions include 55–58 (TCNR), serine 114, 119–121 (ETQ), and glutamine 125. Cysteine 56 acts as the Nucleophile in catalysis. Position 194 to 199 (194 to 199 (GAGEMI)) interacts with NADP(+).

It belongs to the glutamyl-tRNA reductase family. In terms of assembly, homodimer.

It carries out the reaction (S)-4-amino-5-oxopentanoate + tRNA(Glu) + NADP(+) = L-glutamyl-tRNA(Glu) + NADPH + H(+). It functions in the pathway porphyrin-containing compound metabolism; protoporphyrin-IX biosynthesis; 5-aminolevulinate from L-glutamyl-tRNA(Glu): step 1/2. Catalyzes the NADPH-dependent reduction of glutamyl-tRNA(Glu) to glutamate 1-semialdehyde (GSA). This chain is Glutamyl-tRNA reductase, found in Burkholderia lata (strain ATCC 17760 / DSM 23089 / LMG 22485 / NCIMB 9086 / R18194 / 383).